The sequence spans 815 residues: Protein pygopus (815 aa).

Disordered regions lie at residues 1–107 and 147–711; these read MTHN…QVSA and GMGG…GPMG. Positions 39 to 45 match the Nuclear localization signal motif; sequence PKKRRKT. Positions 46–73 are enriched in low complexity; it reads SSAANSAAAVAAAAAAAAAANSMQQQQA. Over residues 74-86 the composition is skewed to pro residues; sequence PPTPQDLLPPPPM. Residues 188 to 199 show a composition bias toward low complexity; it reads RGMSPMHPHQMG. 2 stretches are compositionally biased toward gly residues: residues 230–248 and 257–269; these read PMGGIAGMGGMSPMGGMGG and GMGGLSPMGGGPN. Over residues 307–316 the composition is skewed to pro residues; it reads LGPPSGPGPG. Composition is skewed to low complexity over residues 323–341, 407–424, 444–478, and 495–545; these read GPQQQQQQPPQPPMNNGQM, SNNNGSNTSNASNNNQNP, PSVSSVASSSVPSPATPTLTPTSTATSMSTSVPTS, and GPSP…HQQH. Over residues 569-580 the composition is skewed to pro residues; sequence PQQPSHLGPPHP. Gly residues predominate over residues 602-621; sequence GGPGMHGGPAGMPPHMGGGP. A compositionally biased stretch (low complexity) spans 622–636; it reads NPHMMGGPHGNAGPH. Over residues 640–656 the composition is skewed to gly residues; the sequence is GHMGGVPGPGPGPGGMN. The span at 663–675 shows a compositional bias: basic residues; it reads MSPHHGHPHHHHN. The span at 678–711 shows a compositional bias: gly residues; that stretch reads GGPGPNMFGGGGGGPMGPGGPMGNMGPMGGGPMG. A PHD-type zinc finger spans residues 747–805; sequence IYPCGMCHKEVNDNDEAVFCESGCNFFFHRTCVGLTEAAFQMLNKEVFAEWCCDKCVSS.

Binds to BCL9 via the PHD-type zinc finger motif, and thereby becomes part of the nuclear ARM/PAN complex. As to expression, ubiquitous throughout embryogenesis and larval development.

The protein localises to the nucleus. In terms of biological role, involved in signal transduction through the Wnt pathway. The chain is Protein pygopus (pygo) from Drosophila melanogaster (Fruit fly).